The chain runs to 216 residues: Pyrophosphatase PpaX (216 aa).

Residue Asp9 is the Nucleophile of the active site.

It belongs to the HAD-like hydrolase superfamily. PpaX family. It depends on Mg(2+) as a cofactor.

The enzyme catalyses diphosphate + H2O = 2 phosphate + H(+). Functionally, hydrolyzes pyrophosphate formed during P-Ser-HPr dephosphorylation by HPrK/P. Might play a role in controlling the intracellular pyrophosphate pool. The protein is Pyrophosphatase PpaX of Bacillus cereus (strain Q1).